We begin with the raw amino-acid sequence, 96 residues long: Pore-forming peptide amoebapore B (96 aa).

A signal peptide spans 1–19; it reads MRAIIFVLIFAIAFAATRE. The 77-residue stretch at 20–96 folds into the Saposin B-type domain; the sequence is GAILCNLCKD…VVVCEKIHAC (77 aa). Disulfide bonds link cysteine 24–cysteine 96, cysteine 27–cysteine 90, and cysteine 54–cysteine 65.

As to quaternary structure, monomer. Homodimer. Hexamer; formed during insertion in the membrane.

The protein localises to the cytoplasmic granule. In terms of biological role, forms pores in the cell membrane of host cells. Has antibacterial activity against M.luteus, no activity against E.coli. Implicated in the cytolytic activity of the parasite. This chain is Pore-forming peptide amoebapore B, found in Entamoeba histolytica (strain ATCC 30459 / HM-1:IMSS / ABRM).